A 1010-amino-acid polypeptide reads, in one-letter code: Ubiquitin conjugation factor E4 (1010 aa).

Residues 13–70 are disordered; that stretch reads AKLQQTNSEANSSKEPKESNIAPEPKKPDLKKRFIGSKATTSNSEQKEISPPVTSGAP. A compositionally biased stretch (basic and acidic residues) spans 24–44; the sequence is SSKEPKESNIAPEPKKPDLKK. A U-box domain is found at 930-1004; it reads DIPDYFLDPL…NTFLKSKRNK (75 aa).

This sequence belongs to the ubiquitin conjugation factor E4 family.

Its subcellular location is the cytoplasm. It is found in the nucleus. It functions in the pathway protein modification; protein ubiquitination. E4 ubiquitin chain-elongation enzyme specifically involved in polyubiquitin chain assembly. Binds to cdc48 and elongates mono- and diubiquitinated ERAD substrates presented by the ufd1-npl4-cdc48 (UNC) AAA ATPase complex to a chain length of 4 to 6 ubiquitin moieties. Delivers these polyubiquitinated substrates to downstream ERAD components, which target them to the proteasome. Enhances ubiquitination at 'Lys-48', but not at 'Lys-29' of the Ub moiety. The protein is Ubiquitin conjugation factor E4 (ufd2) of Schizosaccharomyces pombe (strain 972 / ATCC 24843) (Fission yeast).